A 28-amino-acid chain; its full sequence is Conotoxin Cl5.3 (28 aa).

The protein belongs to the conotoxin T superfamily. Post-translationally, contains 2 disulfide bonds that can be either 'C1-C3, C2-C4' or 'C1-C4, C2-C3', since these disulfide connectivities have been observed for conotoxins with cysteine framework V (for examples, see AC P0DQQ7 and AC P81755). As to expression, expressed by the venom duct.

It is found in the secreted. This is Conotoxin Cl5.3 from Californiconus californicus (California cone).